The primary structure comprises 62 residues: Conorfamide-Tx1 (62 aa).

An N-terminal signal peptide occupies residues 1-19 (MSGRGFLLLALLLLVTVEA). A propeptide spanning residues 20 to 26 (TKVEKNK) is cleaved from the precursor. Tyr-46 carries the post-translational modification Tyrosine amide. The propeptide occupies 47 to 62 (GRRDMQSPLLSERLRF).

This sequence belongs to the FARP (FMRFamide related peptide) family. As to expression, expressed by the venom duct.

The protein localises to the secreted. Functionally, this peptide does not show activity on human and mouse sensory neuron-specific G-protein coupled receptors MRGPRX1. The sequence is that of Conorfamide-Tx1 from Conus textile (Cloth-of-gold cone).